A 211-amino-acid polypeptide reads, in one-letter code: Protein-L-isoaspartate O-methyltransferase (211 aa).

The active site involves Ser-62.

Belongs to the methyltransferase superfamily. L-isoaspartyl/D-aspartyl protein methyltransferase family.

It localises to the cytoplasm. The enzyme catalyses [protein]-L-isoaspartate + S-adenosyl-L-methionine = [protein]-L-isoaspartate alpha-methyl ester + S-adenosyl-L-homocysteine. Its function is as follows. Catalyzes the methyl esterification of L-isoaspartyl residues in peptides and proteins that result from spontaneous decomposition of normal L-aspartyl and L-asparaginyl residues. It plays a role in the repair and/or degradation of damaged proteins. This Shewanella sp. (strain ANA-3) protein is Protein-L-isoaspartate O-methyltransferase.